The primary structure comprises 325 residues: UDP-N-acetylglucosamine transporter (325 aa).

8 helical membrane passes run 8–24, 42–58, 138–154, 173–189, 209–225, 246–262, 268–284, and 295–311; these read VSLGILVFQTTSLVLTM, AVVVAELLKIMACILLV, VYQWLSLVILMTGVAFV, FVGLMAVLTACFSSGFA, IQLGFFGSIFGLMGVYI, IVVVLQALGGLVIAAVI, ILKGFATSLSIILSTLI, and TSVFFLGAILVITATFL.

This sequence belongs to the nucleotide-sugar transporter family. SLC35A subfamily. In terms of assembly, interacts with SLC35A2; the interaction is reduced in the presence of SLC35A4. Found in a complex with SLC35A2 and SLC35A4. Interacts with MGAT4B. Post-translationally, O-Glcnacylation regulates the stability of SLC35A3 and the specific complex formation with MGAT4B.

The protein localises to the golgi apparatus membrane. It carries out the reaction UMP(out) + UDP-N-acetyl-alpha-D-glucosamine(in) = UMP(in) + UDP-N-acetyl-alpha-D-glucosamine(out). In terms of biological role, transports diphosphate-N-acetylglucosamine (UDP-GlcNAc) from the cytosol into the lumen of the Golgi apparatus, functioning as an antiporter that exchanges UDP-N-acetyl-alpha-D-glucosamine for UMP. May supply UDP-GlcNAc as substrate for Golgi-resident glycosyltransferases that generate highly branched, multiantennary complex N-glycans and keratan sulfate. However, the exact role of SLC35A3 still needs to be elucidated, it could be a member of a catalytically more efficient multiprotein complex rather than function independently as a single transporter. The sequence is that of UDP-N-acetylglucosamine transporter (SLC35A3) from Homo sapiens (Human).